Here is a 393-residue protein sequence, read N- to C-terminus: NAD(P)H-quinone oxidoreductase subunit H, chloroplastic (393 aa).

It belongs to the complex I 49 kDa subunit family. As to quaternary structure, NDH is composed of at least 16 different subunits, 5 of which are encoded in the nucleus.

The protein resides in the plastid. The protein localises to the chloroplast thylakoid membrane. The catalysed reaction is a plastoquinone + NADH + (n+1) H(+)(in) = a plastoquinol + NAD(+) + n H(+)(out). It carries out the reaction a plastoquinone + NADPH + (n+1) H(+)(in) = a plastoquinol + NADP(+) + n H(+)(out). NDH shuttles electrons from NAD(P)H:plastoquinone, via FMN and iron-sulfur (Fe-S) centers, to quinones in the photosynthetic chain and possibly in a chloroplast respiratory chain. The immediate electron acceptor for the enzyme in this species is believed to be plastoquinone. Couples the redox reaction to proton translocation, and thus conserves the redox energy in a proton gradient. The protein is NAD(P)H-quinone oxidoreductase subunit H, chloroplastic of Drimys granadensis.